The following is a 463-amino-acid chain: NADH dehydrogenase [ubiquinone] iron-sulfur protein 2, mitochondrial (463 aa).

Residues 1-33 (MAALRALCRLRGAAAQVLRPGAGVRLPIQPSRG) constitute a mitochondrion transit peptide. N6-acetyllysine is present on lysine 62. Arginine 118 carries the symmetric dimethylarginine modification. The [4Fe-4S] cluster site is built by cysteine 326, cysteine 332, and cysteine 347.

This sequence belongs to the complex I 49 kDa subunit family. In terms of assembly, core subunit of respiratory chain NADH dehydrogenase (Complex I) which is composed of 45 different subunits. Component of the iron-sulfur (IP) fragment of the enzyme. Interacts with NDUFAF3. Interacts with NDUFAF7. Interacts with CERS2. Requires [4Fe-4S] cluster as cofactor. Dimethylation at Arg-118 by NDUFAF7 takes place after NDUFS2 assembles into the complex I, leading to stabilize the early intermediate complex.

The protein localises to the mitochondrion inner membrane. The catalysed reaction is a ubiquinone + NADH + 5 H(+)(in) = a ubiquinol + NAD(+) + 4 H(+)(out). Functionally, core subunit of the mitochondrial membrane respiratory chain NADH dehydrogenase (Complex I) which catalyzes electron transfer from NADH through the respiratory chain, using ubiquinone as an electron acceptor. Essential for the catalytic activity and assembly of complex I. Redox-sensitive, critical component of the oxygen-sensing pathway in the pulmonary vasculature which plays a key role in acute pulmonary oxygen-sensing and hypoxic pulmonary vasoconstriction. Plays an important role in carotid body sensing of hypoxia. Essential for glia-like neural stem and progenitor cell proliferation, differentiation and subsequent oligodendrocyte or neuronal maturation. In Bos taurus (Bovine), this protein is NADH dehydrogenase [ubiquinone] iron-sulfur protein 2, mitochondrial (NDUFS2).